The following is a 180-amino-acid chain: 3-hexulose-6-phosphate isomerase (180 aa).

Residues 33–167 (LIDRIIKAKK…IAEIMKRLNL (135 aa)) enclose the SIS domain. Substrate contacts are provided by residues S51 and 90–95 (SGSGRT). E147 (proton acceptor) is an active-site residue.

The protein belongs to the SIS family. PHI subfamily. Homotetramer.

It carries out the reaction D-arabino-hex-3-ulose 6-phosphate = beta-D-fructose 6-phosphate. It participates in carbohydrate biosynthesis; D-ribose 5-phosphate biosynthesis. Functionally, catalyzes the isomerization between 3-hexulose 6-phosphate and fructose 6-phosphate. This Methanocaldococcus jannaschii (strain ATCC 43067 / DSM 2661 / JAL-1 / JCM 10045 / NBRC 100440) (Methanococcus jannaschii) protein is 3-hexulose-6-phosphate isomerase (phi).